A 601-amino-acid chain; its full sequence is Jacalin-related lectin 3 (601 aa).

3 Jacalin-type lectin domains span residues 13 to 155 (PASL…HTQP), 240 to 382 (AKTY…HVME), and 438 to 583 (PSGP…HMQH).

Belongs to the jacalin lectin family.

This is Jacalin-related lectin 3 (JAL3) from Arabidopsis thaliana (Mouse-ear cress).